The chain runs to 252 residues: Imidazole glycerol phosphate synthase subunit HisF (252 aa).

Residues aspartate 13 and aspartate 132 contribute to the active site.

The protein belongs to the HisA/HisF family. In terms of assembly, heterodimer of HisH and HisF.

The protein resides in the cytoplasm. The catalysed reaction is 5-[(5-phospho-1-deoxy-D-ribulos-1-ylimino)methylamino]-1-(5-phospho-beta-D-ribosyl)imidazole-4-carboxamide + L-glutamine = D-erythro-1-(imidazol-4-yl)glycerol 3-phosphate + 5-amino-1-(5-phospho-beta-D-ribosyl)imidazole-4-carboxamide + L-glutamate + H(+). Its pathway is amino-acid biosynthesis; L-histidine biosynthesis; L-histidine from 5-phospho-alpha-D-ribose 1-diphosphate: step 5/9. Functionally, IGPS catalyzes the conversion of PRFAR and glutamine to IGP, AICAR and glutamate. The HisF subunit catalyzes the cyclization activity that produces IGP and AICAR from PRFAR using the ammonia provided by the HisH subunit. The sequence is that of Imidazole glycerol phosphate synthase subunit HisF from Campylobacter fetus subsp. fetus (strain 82-40).